A 242-amino-acid polypeptide reads, in one-letter code: 1-(5-phosphoribosyl)-5-[(5-phosphoribosylamino)methylideneamino] imidazole-4-carboxamide isomerase (242 aa).

The active-site Proton acceptor is the D8. D129 serves as the catalytic Proton donor.

The protein belongs to the HisA/HisF family.

It is found in the cytoplasm. The enzyme catalyses 1-(5-phospho-beta-D-ribosyl)-5-[(5-phospho-beta-D-ribosylamino)methylideneamino]imidazole-4-carboxamide = 5-[(5-phospho-1-deoxy-D-ribulos-1-ylimino)methylamino]-1-(5-phospho-beta-D-ribosyl)imidazole-4-carboxamide. The protein operates within amino-acid biosynthesis; L-histidine biosynthesis; L-histidine from 5-phospho-alpha-D-ribose 1-diphosphate: step 4/9. The sequence is that of 1-(5-phosphoribosyl)-5-[(5-phosphoribosylamino)methylideneamino] imidazole-4-carboxamide isomerase from Maridesulfovibrio salexigens (strain ATCC 14822 / DSM 2638 / NCIMB 8403 / VKM B-1763) (Desulfovibrio salexigens).